The sequence spans 494 residues: UDP-N-acetylmuramoyl-L-alanyl-D-glutamate--2,6-diaminopimelate ligase (494 aa).

Serine 32 provides a ligand contact to UDP-N-acetyl-alpha-D-muramoyl-L-alanyl-D-glutamate. ATP is bound at residue 112–118 (GTNGKTT). Residues asparagine 153, 154–155 (TT), serine 181, and arginine 189 each bind UDP-N-acetyl-alpha-D-muramoyl-L-alanyl-D-glutamate. An N6-carboxylysine modification is found at lysine 221. Residues arginine 383, 407–410 (DNPR), glycine 459, and glutamate 463 each bind meso-2,6-diaminopimelate. The short motif at 407–410 (DNPR) is the Meso-diaminopimelate recognition motif element.

The protein belongs to the MurCDEF family. MurE subfamily. Mg(2+) is required as a cofactor. In terms of processing, carboxylation is probably crucial for Mg(2+) binding and, consequently, for the gamma-phosphate positioning of ATP.

The protein resides in the cytoplasm. The catalysed reaction is UDP-N-acetyl-alpha-D-muramoyl-L-alanyl-D-glutamate + meso-2,6-diaminopimelate + ATP = UDP-N-acetyl-alpha-D-muramoyl-L-alanyl-gamma-D-glutamyl-meso-2,6-diaminopimelate + ADP + phosphate + H(+). The protein operates within cell wall biogenesis; peptidoglycan biosynthesis. Its function is as follows. Catalyzes the addition of meso-diaminopimelic acid to the nucleotide precursor UDP-N-acetylmuramoyl-L-alanyl-D-glutamate (UMAG) in the biosynthesis of bacterial cell-wall peptidoglycan. This chain is UDP-N-acetylmuramoyl-L-alanyl-D-glutamate--2,6-diaminopimelate ligase, found in Solibacter usitatus (strain Ellin6076).